The following is a 597-amino-acid chain: Aspartate--tRNA(Asp/Asn) ligase (597 aa).

Glutamate 175 is a binding site for L-aspartate. Positions 199 to 202 are aspartate; that stretch reads QLFK. Arginine 221 contributes to the L-aspartate binding site. Residues 221-223 and glutamine 230 each bind ATP; that span reads RDE. Residue histidine 453 participates in L-aspartate binding. Glutamate 487 serves as a coordination point for ATP. Arginine 494 lines the L-aspartate pocket. 539–542 is an ATP binding site; that stretch reads GWDR. The segment at 562 to 597 is disordered; sequence SGGGVDPLTDAPAPITPEQRKESGIDAKPKKKETKN. The span at 579–589 shows a compositional bias: basic and acidic residues; it reads EQRKESGIDAK.

It belongs to the class-II aminoacyl-tRNA synthetase family. Type 1 subfamily. As to quaternary structure, homodimer.

The protein localises to the cytoplasm. The enzyme catalyses tRNA(Asx) + L-aspartate + ATP = L-aspartyl-tRNA(Asx) + AMP + diphosphate. Its function is as follows. Aspartyl-tRNA synthetase with relaxed tRNA specificity since it is able to aspartylate not only its cognate tRNA(Asp) but also tRNA(Asn). Reaction proceeds in two steps: L-aspartate is first activated by ATP to form Asp-AMP and then transferred to the acceptor end of tRNA(Asp/Asn). The sequence is that of Aspartate--tRNA(Asp/Asn) ligase from Corynebacterium kroppenstedtii (strain DSM 44385 / JCM 11950 / CIP 105744 / CCUG 35717).